The primary structure comprises 488 residues: Glutamate--tRNA ligase (488 aa).

Residues 8 to 18 carry the 'HIGH' region motif; that stretch reads PSPTGPLHIGG. Residues Cys105, Cys107, Cys132, and His134 each contribute to the Zn(2+) site. Positions 249–253 match the 'KMSKS' region motif; it reads KMSKR. Lys252 serves as a coordination point for ATP.

This sequence belongs to the class-I aminoacyl-tRNA synthetase family. Glutamate--tRNA ligase type 1 subfamily. Monomer. It depends on Zn(2+) as a cofactor.

It is found in the cytoplasm. It catalyses the reaction tRNA(Glu) + L-glutamate + ATP = L-glutamyl-tRNA(Glu) + AMP + diphosphate. Catalyzes the attachment of glutamate to tRNA(Glu) in a two-step reaction: glutamate is first activated by ATP to form Glu-AMP and then transferred to the acceptor end of tRNA(Glu). This is Glutamate--tRNA ligase from Desulfitobacterium hafniense (strain Y51).